Reading from the N-terminus, the 294-residue chain is NAD kinase (294 aa).

Aspartate 73 acts as the Proton acceptor in catalysis. Residues 73-74, 147-148, histidine 158, arginine 175, aspartate 177, and 188-193 each bind NAD(+); these read DG, NE, and TAYALS.

Belongs to the NAD kinase family. A divalent metal cation serves as cofactor.

It is found in the cytoplasm. It carries out the reaction NAD(+) + ATP = ADP + NADP(+) + H(+). Involved in the regulation of the intracellular balance of NAD and NADP, and is a key enzyme in the biosynthesis of NADP. Catalyzes specifically the phosphorylation on 2'-hydroxyl of the adenosine moiety of NAD to yield NADP. This chain is NAD kinase, found in Tolumonas auensis (strain DSM 9187 / NBRC 110442 / TA 4).